We begin with the raw amino-acid sequence, 254 residues long: N(G),N(G)-dimethylarginine dimethylaminohydrolase (254 aa).

Residues L18, D60, 65-66 (ED), R85, and R132 contribute to the substrate site. Catalysis depends on H162, which acts as the Proton donor. Residue H162 coordinates Zn(2+). A substrate-binding site is contributed by I243. C249 contacts Zn(2+). The Nucleophile role is filled by C249.

Belongs to the DDAH family. As to quaternary structure, homodimer.

It catalyses the reaction N(omega),N(omega)-dimethyl-L-arginine + H2O = dimethylamine + L-citrulline. The catalysed reaction is N(omega)-methyl-L-arginine + H2O = L-citrulline + methylamine. Its activity is regulated as follows. Inhibited by zinc ions. Competitively inhibited by lysine. Hydrolyzes N(G),N(G)-dimethyl-L-arginine (ADMA) and N(G)-monomethyl-L-arginine (MMA). The chain is N(G),N(G)-dimethylarginine dimethylaminohydrolase from Pseudomonas aeruginosa (strain ATCC 15692 / DSM 22644 / CIP 104116 / JCM 14847 / LMG 12228 / 1C / PRS 101 / PAO1).